A 190-amino-acid chain; its full sequence is Crossover junction endodeoxyribonuclease RuvC (190 aa).

Active-site residues include Asp-8, Glu-67, and Asp-139. Mg(2+) contacts are provided by Asp-8, Glu-67, and Asp-139.

This sequence belongs to the RuvC family. Homodimer which binds Holliday junction (HJ) DNA. The HJ becomes 2-fold symmetrical on binding to RuvC with unstacked arms; it has a different conformation from HJ DNA in complex with RuvA. In the full resolvosome a probable DNA-RuvA(4)-RuvB(12)-RuvC(2) complex forms which resolves the HJ. Requires Mg(2+) as cofactor.

The protein resides in the cytoplasm. The catalysed reaction is Endonucleolytic cleavage at a junction such as a reciprocal single-stranded crossover between two homologous DNA duplexes (Holliday junction).. Functionally, the RuvA-RuvB-RuvC complex processes Holliday junction (HJ) DNA during genetic recombination and DNA repair. Endonuclease that resolves HJ intermediates. Cleaves cruciform DNA by making single-stranded nicks across the HJ at symmetrical positions within the homologous arms, yielding a 5'-phosphate and a 3'-hydroxyl group; requires a central core of homology in the junction. The consensus cleavage sequence is 5'-(A/T)TT(C/G)-3'. Cleavage occurs on the 3'-side of the TT dinucleotide at the point of strand exchange. HJ branch migration catalyzed by RuvA-RuvB allows RuvC to scan DNA until it finds its consensus sequence, where it cleaves and resolves the cruciform DNA. This Haemophilus influenzae (strain 86-028NP) protein is Crossover junction endodeoxyribonuclease RuvC.